Here is a 336-residue protein sequence, read N- to C-terminus: MLKTILVGATGYTGAELAHYITKHPELELAGLYVSEHSLDAGKPFSSLYGHLLGVVDQTIEPLAVSNIKNICDDVDIVVLATAHEVSHDIAAEFLAQDTVVFDLSGAFRVNDPAFYENYYGFKHNFDKELQSAVYGLAEWASADIAEANLIAVPGCYPTASLSALKPLAKHGLISTDQKPIINAVSGVSGAGRKASLASAFCEVSHAPYGVFNHRHQPEISTHLGHEVIFTPHLGSFKRGILATINVKLAAGVTPEQVTAAYQEAYQDQPMVRLLPSGWPSIKAVEKTAYCDLAWQQQGQDLIVVSAIDNLLKGAAAQAMQCINIRFGFAMTTSLV.

The active site involves cysteine 156.

This sequence belongs to the NAGSA dehydrogenase family. Type 1 subfamily.

The protein localises to the cytoplasm. The enzyme catalyses N-acetyl-L-glutamate 5-semialdehyde + phosphate + NADP(+) = N-acetyl-L-glutamyl 5-phosphate + NADPH + H(+). It functions in the pathway amino-acid biosynthesis; L-arginine biosynthesis; N(2)-acetyl-L-ornithine from L-glutamate: step 3/4. Its function is as follows. Catalyzes the NADPH-dependent reduction of N-acetyl-5-glutamyl phosphate to yield N-acetyl-L-glutamate 5-semialdehyde. The polypeptide is N-acetyl-gamma-glutamyl-phosphate reductase (Moritella profunda).